A 411-amino-acid polypeptide reads, in one-letter code: MPKVLAIVLAGGKGERLFPLTSFRSKPSVPFGARYRIVDFVLSNLVNSQIYSIYLLVQYKSQSLIEHIRQNWFFSSVGSDHFVTVVPPQMRMGPEWFQGTADAVFQNIGLIKEHNPDIVLIFGADHIYRMDIRQMIKFHIENNAHVTVAARPVALKHASSFGVIITDPDHRIAGFQEKPKDPIPMPDNPDMAYVSMGNYIFNADILIDALVRAEKKKQHDFGAHVIPDLVGRKCKVYAYDFAKNEIPGIKSYEERGYWRDVGTISAYFDAHMDMLGEKPIFEIYNKMWPIHPARYEGPPVKILDGEIKNSIIAEGALIYGGKIENSFIRSGSIIEKDVEIKDSLIMDDVIIKRNSKLYRVIVDKKNVVYEGEKIGFSAEQDRFRCYIDSSGICILPRAARYNDWIKEINHA.

Residues Gly162, 177–178 (EK), and Ser195 each bind alpha-D-glucose 1-phosphate.

The protein belongs to the bacterial/plant glucose-1-phosphate adenylyltransferase family. In terms of assembly, homotetramer.

The enzyme catalyses alpha-D-glucose 1-phosphate + ATP + H(+) = ADP-alpha-D-glucose + diphosphate. It participates in glycan biosynthesis; glycogen biosynthesis. Involved in the biosynthesis of ADP-glucose, a building block required for the elongation reactions to produce glycogen. Catalyzes the reaction between ATP and alpha-D-glucose 1-phosphate (G1P) to produce pyrophosphate and ADP-Glc. The sequence is that of Glucose-1-phosphate adenylyltransferase from Thermodesulfovibrio yellowstonii (strain ATCC 51303 / DSM 11347 / YP87).